We begin with the raw amino-acid sequence, 251 residues long: HTH-type transcriptional regulator UlaR (251 aa).

Residues 3–58 (EAQRHQILLEMLAQLGFVTVEKVVERLGISPATARRDINKLDERGKLKKVRNGAEA) enclose the HTH deoR-type domain. The segment at residues 20–39 (VTVEKVVERLGISPATARRD) is a DNA-binding region (H-T-H motif).

The protein resides in the cytoplasm. In terms of biological role, represses ulaG and the ulaABCDEF operon. This chain is HTH-type transcriptional regulator UlaR, found in Shigella sonnei (strain Ss046).